Consider the following 154-residue polypeptide: Oleosin 16.4 kDa (154 aa).

Ala2 bears the N-acetylalanine mark. Residues 2 to 33 are polar; it reads ADRDRSYRTFDQVVRGDRTNYQSGPSTTQVLT. 3 helical membrane passes run 31–51, 65–85, and 86–106; these read VLTV…AGLT, LFVI…MAVA, and GFLS…YVFN. Residues 34-105 form a hydrophobic region; sequence VLTLLPIGGT…TGLSSLSYVF (72 aa).

The protein belongs to the oleosin family.

The protein localises to the lipid droplet. Its subcellular location is the membrane. In terms of biological role, may have a structural role to stabilize the lipid body during desiccation of the seed by preventing coalescence of the oil. Probably interacts with both lipid and phospholipid moieties of lipid bodies. May also provide recognition signals for specific lipase anchorage in lipolysis during seedling growth. The sequence is that of Oleosin 16.4 kDa (MATP7) from Gossypium hirsutum (Upland cotton).